We begin with the raw amino-acid sequence, 571 residues long: Cyclic di-GMP phosphodiesterase TpdA (571 aa).

Helical transmembrane passes span 155–175, 321–341, and 395–415; these read IAWV…YAIN, VYYI…FLVI, and TLIS…AIYA. Residues 344–571 form the EAL domain; the sequence is HRSLQAFITY…HQGYFYPLHF (228 aa).

Its subcellular location is the cell inner membrane. The catalysed reaction is 3',3'-c-di-GMP + H2O = 5'-phosphoguanylyl(3'-&gt;5')guanosine + H(+). Functionally, cyclic di-GMP phosphodiesterase that plays an important role in modulating the global c-di-GMP pool. Its ability to alter the c-di-GMP pool has an effect on swimming motility, swarming motility and biofilm formation, multicellular behaviors that are important for the survival and dissemination of this environmental pathogen. Exhibits a dual function, namely, c-di-GMP degradation and modulation of its own expression. This chain is Cyclic di-GMP phosphodiesterase TpdA, found in Vibrio parahaemolyticus serotype O3:K6 (strain RIMD 2210633).